The chain runs to 73 residues: Ocellatin-PT8 (73 aa).

A signal peptide spans 1 to 22 (MAFLKKSLFLVLFLGLVSLSIC). The propeptide occupies 23–39 (DEEKRQDEDDDDDDDEE).

In terms of tissue distribution, expressed by the skin glands.

Its subcellular location is the secreted. In terms of biological role, has antibacterial activity against Gram-negative bacteria E.coli ATCC 25922 (MIC=60 uM), K.pneumoniae ATCC 700603 (MIC=240 uM) and S.choleraesuis ATCC 14028 (MIC=240 uM) and against Gram-positive bacterium S.aureus ATCC 29313 (MIC=240 uM). Shows no hemolytic activity and no cytotoxicity. The chain is Ocellatin-PT8 from Leptodactylus pustulatus (Ceara white-lipped frog).